A 220-amino-acid chain; its full sequence is MAFRDQPLGELVLSIPRASALFRKYDMDYCCGGKQTLERAALRKELDVDAIEAELAQLAEQPIDKDWRTVALGEIIDHIIVRYHDRHREQLPELILQATKVERVHADKASVPRGLAKYLTMLHEELFSHMMKEEQILFPMIKQGMGSQAMGPISVMESEHDDAGELLEVIKHTTDNVTPPADACTTWKAMYNGINELIDDLMEHISLENNVLFPRALAGE.

Belongs to the RIC family. YtfE subfamily. Homodimer.

The protein localises to the cytoplasm. Its function is as follows. Di-iron-containing protein involved in the repair of iron-sulfur clusters damaged by oxidative and nitrosative stress conditions. This Enterobacter sp. (strain 638) protein is Iron-sulfur cluster repair protein YtfE.